The primary structure comprises 37 residues: Beta-2-microglobulin (37 aa).

In terms of domain architecture, Ig-like C1-type spans 11 to 37; that stretch reads GKEDVLICHVSNFHPPDITITLLKNGE.

Belongs to the beta-2-microglobulin family. Heterodimer of an alpha chain and a beta chain. Beta-2-microglobulin is the beta-chain of major histocompatibility complex class I molecules.

It is found in the secreted. Component of the class I major histocompatibility complex (MHC). Involved in the presentation of peptide antigens to the immune system. In Oreochromis niloticus (Nile tilapia), this protein is Beta-2-microglobulin (b2m).